The sequence spans 402 residues: S-adenosylmethionine synthase (402 aa).

An ATP-binding site is contributed by His-16. Residue Asp-18 coordinates Mg(2+). K(+) is bound at residue Glu-44. Residues Glu-57 and Gln-103 each coordinate L-methionine. The segment at 103 to 113 (QSPDIAQGVDT) is flexible loop. Residues 178 to 180 (DGK), 249 to 250 (KF), Asp-258, 264 to 265 (RK), Ala-281, and Lys-285 contribute to the ATP site. Position 258 (Asp-258) interacts with L-methionine. Lys-289 lines the L-methionine pocket.

Belongs to the AdoMet synthase family. In terms of assembly, homotetramer; dimer of dimers. Requires Mg(2+) as cofactor. The cofactor is K(+).

The protein localises to the cytoplasm. The catalysed reaction is L-methionine + ATP + H2O = S-adenosyl-L-methionine + phosphate + diphosphate. It participates in amino-acid biosynthesis; S-adenosyl-L-methionine biosynthesis; S-adenosyl-L-methionine from L-methionine: step 1/1. Functionally, catalyzes the formation of S-adenosylmethionine (AdoMet) from methionine and ATP. The overall synthetic reaction is composed of two sequential steps, AdoMet formation and the subsequent tripolyphosphate hydrolysis which occurs prior to release of AdoMet from the enzyme. The polypeptide is S-adenosylmethionine synthase (Mycolicibacterium vanbaalenii (strain DSM 7251 / JCM 13017 / BCRC 16820 / KCTC 9966 / NRRL B-24157 / PYR-1) (Mycobacterium vanbaalenii)).